The following is a 64-amino-acid chain: Phylloxin-S1 (64 aa).

The signal sequence occupies residues M1–C22. The propeptide occupies E23–R44. Q63 carries the post-translational modification Glutamine amide.

Expressed by the skin glands.

The protein localises to the secreted. In terms of biological role, antimicrobial peptide against both Gram-positive and Gram-negative bacteria. This chain is Phylloxin-S1, found in Phyllomedusa sauvagei (Sauvage's leaf frog).